Here is a 194-residue protein sequence, read N- to C-terminus: ATP-dependent Clp protease proteolytic subunit (194 aa).

The Nucleophile role is filled by S98. Residue H123 is part of the active site.

The protein belongs to the peptidase S14 family. Fourteen ClpP subunits assemble into 2 heptameric rings which stack back to back to give a disk-like structure with a central cavity, resembling the structure of eukaryotic proteasomes.

The protein localises to the cytoplasm. The enzyme catalyses Hydrolysis of proteins to small peptides in the presence of ATP and magnesium. alpha-casein is the usual test substrate. In the absence of ATP, only oligopeptides shorter than five residues are hydrolyzed (such as succinyl-Leu-Tyr-|-NHMec, and Leu-Tyr-Leu-|-Tyr-Trp, in which cleavage of the -Tyr-|-Leu- and -Tyr-|-Trp bonds also occurs).. In terms of biological role, cleaves peptides in various proteins in a process that requires ATP hydrolysis. Has a chymotrypsin-like activity. Plays a major role in the degradation of misfolded proteins. The sequence is that of ATP-dependent Clp protease proteolytic subunit from Staphylococcus epidermidis (strain ATCC 35984 / DSM 28319 / BCRC 17069 / CCUG 31568 / BM 3577 / RP62A).